A 640-amino-acid chain; its full sequence is MLNKMTLHPQQIMIGPRFNRALFDPLLVVLLALQLLVVAGLVRAQTCPSVCSCSNQFSKVICVRKNLREVPDGISTNTRLLNLHENQIQIIKVNSFKHLRHLEILQLSRNHIRTIEIGAFNGLANLNTLELFDNRLTTIPNGAFVYLSKLKELWLRNNPIESIPSYAFNRIPSLRRLDLGELKRLSYISEGAFEGLSNLRYLNLAMCNLREIPNLTPLIKLDELDLSGNHLSAIRPGSFQGLMHLQKLWMIQSQIQVIERNAFDNLQSLVEINLAHNNLTLLPHDLFTPLHHLERIHLHHNPWNCNCDILWLSWWIKDMAPSNTACCARCNTPPNLKGRYIGELDQNYFTCYAPVIVEPPADLNVTEGMAAELKCRASTSLTSVSWITPNGTVMTHGAYKVRIAVLSDGTLNFTNVTVQDTGMYTCMVSNSVGNTTASATLNVTAATTTPFSYFSTVTVETMEPSQDEARTTDNNVGPTPVVDWETTNVTTSLTPQSTRSTEKTFTIPVTDINSGIPGIDEVMKTTKIIIGCFVAITLMAAVMLVIFYKMRKQHHRQNHHAPTRTVEIINVDDEITGDTPMESHLPMPAIEHEHLNHYNSYKSPFNHTTTVNTINSIHSSVHEPLLIRMNSKDNVQETQI.

Residues 1 to 44 (MLNKMTLHPQQIMIGPRFNRALFDPLLVVLLALQLLVVAGLVRA) form the signal peptide. An LRRNT domain is found at 45–76 (QTCPSVCSCSNQFSKVICVRKNLREVPDGIST). LRR repeat units follow at residues 77 to 98 (NTRL…SFKH), 101 to 122 (HLEI…AFNG), 125 to 146 (NLNT…AFVY), 149 to 170 (KLKE…AFNR), 173 to 195 (SLRR…AFEG), 198 to 219 (NLRY…TPLI), 220 to 241 (KLDE…SFQG), 244 to 265 (HLQK…AFDN), and 268 to 289 (SLVE…LFTP). One can recognise an LRRCT domain in the interval 301–353 (NPWNCNCDILWLSWWIKDMAPSNTACCARCNTPPNLKGRYIGELDQNYFTCYA). An Ig-like C2-type domain is found at 354-442 (PVIVEPPADL…GNTTASATLN (89 aa)). C375 and C426 are disulfide-bonded. The disordered stretch occupies residues 463-483 (EPSQDEARTTDNNVGPTPVVD). The helical transmembrane segment at 528-548 (IIIGCFVAITLMAAVMLVIFY) threads the bilayer. At S631 the chain carries Phosphoserine.

Interacts with NTNG1 and WHRN. In terms of tissue distribution, highly expressed in the cerebral cortex, including frontal, parietal and occipital lobes. Putamen, amygdala, hippocampus and medulla oblongata show moderate expression. Caudate nucleus and thalamus express small amounts, whereas other brain regions show very weak or no expression.

It localises to the postsynaptic cell membrane. May promote neurite outgrowth of developing thalamic neurons. The protein is Leucine-rich repeat-containing protein 4C (LRRC4C) of Homo sapiens (Human).